Consider the following 377-residue polypeptide: Trichodiene synthase (377 aa).

The protein belongs to the trichodiene synthase family.

The catalysed reaction is (2E,6E)-farnesyl diphosphate = trichodiene + diphosphate. It functions in the pathway sesquiterpene biosynthesis; trichothecene biosynthesis. Its function is as follows. TS is a member of the terpene cyclase group of enzymes. It catalyzes the isomerization and cyclization of farnesyl pyro-phosphate to form trichodiene, the first cyclic intermediate in the biosynthetic pathway for trichothecenes. It serves to branch trichothecene biosynthesis from the isoprenoid pathway. The protein is Trichodiene synthase (TRI5) of Fusarium poae.